The chain runs to 471 residues: Dynein regulatory complex subunit 4 (471 aa).

The segment at 1–24 (MAPKKKGTKKESKKDAVATGDIEG) is disordered. 2 coiled-coil regions span residues 23–239 (EGAS…YNDI) and 282–425 (LSRA…DVAK).

This sequence belongs to the DRC4 family. Component of the nexin-dynein regulatory complex (N-DRC). Interacts with DRC1, DRC2 and DRC5.

The protein localises to the cytoplasm. The protein resides in the cytoskeleton. It is found in the flagellum axoneme. It localises to the flagellum basal body. Its function is as follows. Component of the nexin-dynein regulatory complex (N-DRC), a key regulator of ciliary/flagellar motility which maintains the alignment and integrity of the distal axoneme and regulates microtubule sliding in motile axonemes. Plays an important role in the assembly of the N-DRC linker. The sequence is that of Dynein regulatory complex subunit 4 from Chlamydomonas reinhardtii (Chlamydomonas smithii).